The following is a 185-amino-acid chain: Elongation factor P (185 aa).

The protein belongs to the elongation factor P family.

Its subcellular location is the cytoplasm. It functions in the pathway protein biosynthesis; polypeptide chain elongation. Its function is as follows. Involved in peptide bond synthesis. Stimulates efficient translation and peptide-bond synthesis on native or reconstituted 70S ribosomes in vitro. Probably functions indirectly by altering the affinity of the ribosome for aminoacyl-tRNA, thus increasing their reactivity as acceptors for peptidyl transferase. The sequence is that of Elongation factor P from Deinococcus deserti (strain DSM 17065 / CIP 109153 / LMG 22923 / VCD115).